The sequence spans 369 residues: CLIP domain-containing serine protease HP8 (369 aa).

Positions 1–24 are cleaved as a signal peptide; it reads MKTPFEKIRIISCILVIVSTNVVG. Positions 25-81 are excised as a propeptide; that stretch reads QKCNGGANCIPLEECTDLFQQLKQGNSPQLTRLLRGLHCGFEDLNSPKICCPPEFLA. The region spanning 26–75 is the Clip domain; that stretch reads KCNGGANCIPLEECTDLFQQLKQGNSPQLTRLLRGLHCGFEDLNSPKICC. Cystine bridges form between Cys-27–Cys-74, Cys-33–Cys-63, Cys-39–Cys-75, Cys-105–Cys-239, Cys-142–Cys-158, Cys-186–Cys-191, Cys-286–Cys-303, and Cys-313–Cys-344. Positions 113-368 constitute a Peptidase S1 domain; that stretch reads IFGGIQTEID…FMDWILSKLE (256 aa). The Charge relay system role is filled by His-157. The Ca(2+) site is built by Glu-177, Asn-179, Thr-182, and Asp-185. Asn-179 carries N-linked (GlcNAc...) asparagine glycosylation. Residue Asp-219 is the Charge relay system of the active site. Ser-317 (charge relay system) is an active-site residue.

The protein belongs to the peptidase S1 family. CLIP subfamily. In terms of assembly, in the active form, heterodimer of a light chain and a heavy chain; disulfide-linked. Post-translationally, proteolytically cleaved for activation. Cleavage produces a light chain and a catalytic heavy chain which remains covalently associated probably through an interchain disulfide bond. In terms of tissue distribution, in larvae, expressed in the fat body and hemocytes.

The protein localises to the secreted. It is found in the cytoplasm. With respect to regulation, inhibited by (p-amidinophenyl) methanesulfonyl fluoride, p-nitrophenyl-p'-guanidinobenzoate, D-phenylalanyl-L-prolyl-L-arginyl chloromethane, leupeptin, antipain and to a lesser extent by antithrombin III. Functionally, endopeptidase with selective post-Arg cleavage site. Functions in the innate immune response to fungal and Gram-positive bacterial infections. Upon pathogen infection promotes nodulation; a cellular defense response in which hemocytes surround and isolate invading pathogens forming aggregates called nodules. Involved in activating nodule formation in response to infection with M.luteus, E.coli or S.cerevisiae. Able to bind the microbes M.luteus, E.coli or S.cerevisiae. According to another report, does not bind microorganisms. In Bombyx mori (Silk moth), this protein is CLIP domain-containing serine protease HP8.